Here is a 168-residue protein sequence, read N- to C-terminus: Crossover junction endodeoxyribonuclease RuvC (168 aa).

Catalysis depends on residues Asp9, Glu70, and Asp145. 3 residues coordinate Mg(2+): Asp9, Glu70, and Asp145.

Belongs to the RuvC family. As to quaternary structure, homodimer which binds Holliday junction (HJ) DNA. The HJ becomes 2-fold symmetrical on binding to RuvC with unstacked arms; it has a different conformation from HJ DNA in complex with RuvA. In the full resolvosome a probable DNA-RuvA(4)-RuvB(12)-RuvC(2) complex forms which resolves the HJ. Requires Mg(2+) as cofactor.

Its subcellular location is the cytoplasm. It carries out the reaction Endonucleolytic cleavage at a junction such as a reciprocal single-stranded crossover between two homologous DNA duplexes (Holliday junction).. In terms of biological role, the RuvA-RuvB-RuvC complex processes Holliday junction (HJ) DNA during genetic recombination and DNA repair. Endonuclease that resolves HJ intermediates. Cleaves cruciform DNA by making single-stranded nicks across the HJ at symmetrical positions within the homologous arms, yielding a 5'-phosphate and a 3'-hydroxyl group; requires a central core of homology in the junction. The consensus cleavage sequence is 5'-(A/T)TT(C/G)-3'. Cleavage occurs on the 3'-side of the TT dinucleotide at the point of strand exchange. HJ branch migration catalyzed by RuvA-RuvB allows RuvC to scan DNA until it finds its consensus sequence, where it cleaves and resolves the cruciform DNA. This is Crossover junction endodeoxyribonuclease RuvC from Chlamydia caviae (strain ATCC VR-813 / DSM 19441 / 03DC25 / GPIC) (Chlamydophila caviae).